Reading from the N-terminus, the 497-residue chain is Sperm motility kinase Z (497 aa).

Positions Tyr-28–Leu-275 constitute a Protein kinase domain. Residues Leu-34–Val-42 and Lys-57 each bind ATP. Asp-146 functions as the Proton acceptor in the catalytic mechanism. In terms of domain architecture, UBA spans Phe-292 to Ala-332. 2 disordered regions span residues Thr-383 to Gln-410 and Ser-439 to Leu-460.

It belongs to the protein kinase superfamily. CAMK Ser/Thr protein kinase family. Smok subfamily.

It carries out the reaction L-seryl-[protein] + ATP = O-phospho-L-seryl-[protein] + ADP + H(+). The enzyme catalyses L-threonyl-[protein] + ATP = O-phospho-L-threonyl-[protein] + ADP + H(+). In terms of biological role, may play a role in sperm motility, especially in the regulation of flagellar function. This Mus musculus (Mouse) protein is Sperm motility kinase Z (Gm4922).